The following is a 68-amino-acid chain: MKTQFAILLIALVLFQLLSQSDAFLSTIWNGIKSLLGRRGLNELDNLDELFDGEISQADIDFLKELMS.

The N-terminal stretch at 1-23 (MKTQFAILLIALVLFQLLSQSDA) is a signal peptide. The residue at position 36 (leucine 36) is a Leucine amide. Positions 40–68 (GLNELDNLDELFDGEISQADIDFLKELMS) are excised as a propeptide.

The protein belongs to the non-disulfide-bridged peptide (NDBP) superfamily. Short antimicrobial peptide (group 4) family. Expressed by the venom gland.

The protein localises to the secreted. It is found in the target cell membrane. Amphipathic peptide that possesses relatively strong activities against Gram-positive bacteria and a fungus, but has very weak antimicrobial activities against Gram-negative bacteria. Also exhibits mild hemolytic activities against human erythrocytes (16 uM induce 70% of hemolysis). Furthermore, this peptide potently inhibits the growth of vancomycin-resistant Enterococcus (VRE) S13, a pathogen that can cause a number of human infections. Minimal inhibitory concentration (MIC) are the following: 16 uM against S.aureus, 6 uM against B.magaterium, 8 uM against M.luteus, 4 uM against VRE, 12 uM against methicillin-resistant S.aureus, 36 uM against E.coli, &gt;87 uM against P.putida, 87 uM against K.oxytoca, &gt;87 uM against E.cloacae, 84 uM against S.enterica and 17 uM against the fungus C.tropicalis. This Pandinus imperator (Emperor scorpion) protein is Pantinin-3.